The chain runs to 73 residues: U-scoloptoxin(15)-Sm3a (73 aa).

The N-terminal stretch at 1–23 is a signal peptide; the sequence is MERKVFLLLFVIVLLTLPGFMSA.

This sequence belongs to the scoloptoxin-15 family. In terms of processing, contains 2 disulfide bonds. In terms of tissue distribution, expressed by the venom gland.

Its subcellular location is the secreted. This chain is U-scoloptoxin(15)-Sm3a, found in Scolopendra morsitans (Tanzanian blue ringleg centipede).